The primary structure comprises 123 residues: Insulin-like peptide-1 (123 aa).

An N-terminal signal peptide occupies residues 1–24 (MTTSSYFLLVALGLLLYVCQSSFG). 4 cysteine pairs are disulfide-bonded: Cys29-Cys106, Cys41-Cys109, Cys53-Cys122, and Cys108-Cys113. Position 34 is a 4-hydroxyproline; partial (Pro34). A propeptide spans 59–102 (EQGGANNARAYTGRTSSLMKRRGFLSLLKKRGKRDEGSLQRSGR) (c peptide). Glu107 bears the 4-carboxyglutamate mark. 4-carboxyglutamate; partial is present on Glu117.

Belongs to the insulin family. In terms of assembly, heterodimer of A and B chains; disulfide-linked. Expressed by the venom duct.

The protein resides in the secreted. This venom insulin facilitates prey capture by rapidly inducing hypoglycemic shock. Intraperitoneal injection of this peptide into zebrafish lowers blood glucose with the same potency than human insulin. In vivo, when applied to water, this peptide reduces overall locomotor activity of zebrafish larvae, observed as a significant decrease in the percentage of time spent swimming and movement frequency. The chain is Insulin-like peptide-1 from Conus victoriae (Queen Victoria cone).